Here is a 515-residue protein sequence, read N- to C-terminus: Cytoplasmic tRNA 2-thiolation protein 2 (515 aa).

2 disordered regions span residues 1–24 and 188–217; these read MCQVGEDYGEPAPEEPPPAPRPSR and LGAGGGPGPTQGEEQPPQPPLDPQNLARPP. Position 2 is an N-acetylcysteine (Cys-2). Phosphoserine is present on residues Ser-415, Ser-419, Ser-435, and Ser-508.

The protein belongs to the CTU2/NCS2 family. Component of a complex at least composed of URM1, CTU2/NCS2 and CTU1/ATPBD3.

It localises to the cytoplasm. It functions in the pathway tRNA modification; 5-methoxycarbonylmethyl-2-thiouridine-tRNA biosynthesis. Its function is as follows. Plays a central role in 2-thiolation of mcm(5)S(2)U at tRNA wobble positions of tRNA(Lys), tRNA(Glu) and tRNA(Gln). May act by forming a heterodimer with CTU1/ATPBD3 that ligates sulfur from thiocarboxylated URM1 onto the uridine of tRNAs at wobble position. The protein is Cytoplasmic tRNA 2-thiolation protein 2 of Homo sapiens (Human).